Reading from the N-terminus, the 309-residue chain is Phytoene synthase (309 aa).

The protein belongs to the phytoene/squalene synthase family.

The catalysed reaction is 2 (2E,6E,10E)-geranylgeranyl diphosphate = 15-cis-phytoene + 2 diphosphate. It functions in the pathway carotenoid biosynthesis; phytoene biosynthesis; all-trans-phytoene from geranylgeranyl diphosphate: step 1/1. Catalyzes the reaction from prephytoene diphosphate to phytoene. The sequence is that of Phytoene synthase (crtB) from Arthrospira platensis (Spirulina platensis).